The following is a 203-amino-acid chain: Glycerol-3-phosphate acyltransferase (203 aa).

4 helical membrane-spanning segments follow: residues 1 to 21 (MIQT…LGAI), 84 to 104 (WLQV…VWLG), 117 to 137 (IFLG…MAVI), and 157 to 179 (LMLL…LMVL).

This sequence belongs to the PlsY family. In terms of assembly, probably interacts with PlsX.

Its subcellular location is the cell inner membrane. The catalysed reaction is an acyl phosphate + sn-glycerol 3-phosphate = a 1-acyl-sn-glycero-3-phosphate + phosphate. The protein operates within lipid metabolism; phospholipid metabolism. Catalyzes the transfer of an acyl group from acyl-phosphate (acyl-PO(4)) to glycerol-3-phosphate (G3P) to form lysophosphatidic acid (LPA). This enzyme utilizes acyl-phosphate as fatty acyl donor, but not acyl-CoA or acyl-ACP. This Synechococcus sp. (strain CC9605) protein is Glycerol-3-phosphate acyltransferase.